A 352-amino-acid polypeptide reads, in one-letter code: Photosystem II D2 protein (352 aa).

Thr2 carries the N-acetylthreonine modification. Position 2 is a phosphothreonine (Thr2). The helical transmembrane segment at 40-60 threads the bilayer; the sequence is CAYFALGGWLTGTTFVTSWYT. Chlorophyll a is bound at residue His117. A helical membrane pass occupies residues 124–140; sequence GFMLRQFEIARAVKIRP. Positions 129 and 142 each coordinate pheophytin a. A helical transmembrane segment spans residues 152–165; that stretch reads VFVSVFLIYPLGQA. His197 serves as a coordination point for chlorophyll a. A helical membrane pass occupies residues 207 to 227; it reads AALLCAIHGATVENTLFEDGD. His214 and Phe261 together coordinate a plastoquinone. Residue His214 coordinates Fe cation. His268 contacts Fe cation. Residues 278–294 traverse the membrane as a helical segment; the sequence is GLWMSALGVVGLALNLR.

The protein belongs to the reaction center PufL/M/PsbA/D family. In terms of assembly, PSII is composed of 1 copy each of membrane proteins PsbA, PsbB, PsbC, PsbD, PsbE, PsbF, PsbH, PsbI, PsbJ, PsbK, PsbL, PsbM, PsbT, PsbX, PsbY, PsbZ, Psb30/Ycf12, at least 3 peripheral proteins of the oxygen-evolving complex and a large number of cofactors. It forms dimeric complexes. Requires The D1/D2 heterodimer binds P680, chlorophylls that are the primary electron donor of PSII, and subsequent electron acceptors. It shares a non-heme iron and each subunit binds pheophytin, quinone, additional chlorophylls, carotenoids and lipids. There is also a Cl(-1) ion associated with D1 and D2, which is required for oxygen evolution. The PSII complex binds additional chlorophylls, carotenoids and specific lipids. as cofactor.

The protein localises to the plastid. The protein resides in the chloroplast thylakoid membrane. The enzyme catalyses 2 a plastoquinone + 4 hnu + 2 H2O = 2 a plastoquinol + O2. Its function is as follows. Photosystem II (PSII) is a light-driven water:plastoquinone oxidoreductase that uses light energy to abstract electrons from H(2)O, generating O(2) and a proton gradient subsequently used for ATP formation. It consists of a core antenna complex that captures photons, and an electron transfer chain that converts photonic excitation into a charge separation. The D1/D2 (PsbA/PsbD) reaction center heterodimer binds P680, the primary electron donor of PSII as well as several subsequent electron acceptors. D2 is needed for assembly of a stable PSII complex. The sequence is that of Photosystem II D2 protein from Tupiella akineta (Green alga).